We begin with the raw amino-acid sequence, 585 residues long: Putative indole-3-acetic acid-amido synthetase GH3.9 (585 aa).

The protein belongs to the IAA-amido conjugating enzyme family.

Functionally, catalyzes the synthesis of indole-3-acetic acid (IAA)-amino acid conjugates, providing a mechanism for the plant to cope with the presence of excess auxin. The polypeptide is Putative indole-3-acetic acid-amido synthetase GH3.9 (GH3.9) (Arabidopsis thaliana (Mouse-ear cress)).